The following is a 217-amino-acid chain: 3,4-dihydroxy-2-butanone 4-phosphate synthase (217 aa).

D-ribulose 5-phosphate is bound by residues 37–38 (RE), D42, 150–154 (RRGHT), and E174. E38 is a binding site for Mg(2+). Residue H153 participates in Mg(2+) binding.

Belongs to the DHBP synthase family. As to quaternary structure, homodimer. Mg(2+) is required as a cofactor. It depends on Mn(2+) as a cofactor.

It catalyses the reaction D-ribulose 5-phosphate = (2S)-2-hydroxy-3-oxobutyl phosphate + formate + H(+). It participates in cofactor biosynthesis; riboflavin biosynthesis; 2-hydroxy-3-oxobutyl phosphate from D-ribulose 5-phosphate: step 1/1. Catalyzes the conversion of D-ribulose 5-phosphate to formate and 3,4-dihydroxy-2-butanone 4-phosphate. The sequence is that of 3,4-dihydroxy-2-butanone 4-phosphate synthase from Yersinia enterocolitica serotype O:8 / biotype 1B (strain NCTC 13174 / 8081).